The chain runs to 403 residues: Phosphoglycerate kinase (403 aa).

Substrate-binding positions include 24 to 26 (DLN), R39, 62 to 65 (HLGR), R121, and R161. Residues K211, G299, E330, and 359-362 (GGDS) each bind ATP.

The protein belongs to the phosphoglycerate kinase family. As to quaternary structure, monomer.

It localises to the cytoplasm. The enzyme catalyses (2R)-3-phosphoglycerate + ATP = (2R)-3-phospho-glyceroyl phosphate + ADP. It participates in carbohydrate degradation; glycolysis; pyruvate from D-glyceraldehyde 3-phosphate: step 2/5. This Corynebacterium kroppenstedtii (strain DSM 44385 / JCM 11950 / CIP 105744 / CCUG 35717) protein is Phosphoglycerate kinase.